The chain runs to 933 residues: Progesterone receptor (933 aa).

A disordered region spans residues 1–157 (MTELKAKGPR…PEDPPAAPAT (157 aa)). The interval 1-164 (MTELKAKGPR…PATQRVLSPL (164 aa)) is AF3; mediates transcriptional activation (in isoform B). A modulating, Pro-Rich region spans residues 1–566 (MTELKAKGPR…YSFESLPQKI (566 aa)). Lysine 7 is covalently cross-linked (Glycyl lysine isopeptide (Lys-Gly) (interchain with G-Cter in SUMO)). Serine 20 carries the post-translational modification Phosphoserine. The LXXL motif 1 motif lies at 55 to 59 (LDGLL). Serine 81 and serine 102 each carry phosphoserine. An LXXL motif 2 motif is present at residues 115-119 (LDTLL). 2 positions are modified to phosphoserine: serine 130 and serine 162. Residues 165–305 (MSRSGCKVGD…LATTVMDFIH (141 aa)) are mediates transcriptional transrepression (in isoform A). Positions 183 to 187 (KVLPR) match the Nuclear localization signal motif. 2 positions are modified to phosphoserine: serine 190 and serine 213. The segment at 195–241 (LLLPASESPHWSGAPVKPSPQAAAVEVEEEDGSESEESAGPLLKGKP) is disordered. Acidic residues predominate over residues 220–231 (EVEEEDGSESEE). Residues 232 to 241 (SAGPLLKGKP) show a composition bias toward low complexity. Phosphoserine; by MAPK1 is present on serine 294. A disordered region spans residues 331 to 351 (GGAGAASAFAPPRSSPCASST). Residues 335–350 (AASAFAPPRSSPCASS) are compositionally biased toward low complexity. Serine 345 is subject to Phosphoserine; by MAPK. Lysine 388 is covalently cross-linked (Glycyl lysine isopeptide (Lys-Gly) (interchain with G-Cter in SUMO); alternate). Lysine 388 is covalently cross-linked (Glycyl lysine isopeptide (Lys-Gly) (interchain with G-Cter in ubiquitin); alternate). Serine 400 carries the phosphoserine; by CDK2 modification. The tract at residues 415 to 452 (PDFPLGPPPPLPPRATPSRPGEAAVTAAPASASVSSAS) is disordered. Positions 418 to 429 (PLGPPPPLPPRA) are enriched in pro residues. The segment covering 430–452 (TPSRPGEAAVTAAPASASVSSAS) has biased composition (low complexity). Residues 456–546 (STLECILYKA…VYPPYLNYLR (91 aa)) are AF1; mediates transcriptional activation. Lysine 531 participates in a covalent cross-link: Glycyl lysine isopeptide (Lys-Gly) (interchain with G-Cter in SUMO). 2 consecutive NR C4-type zinc fingers follow at residues 567–587 (CLICGDEASGCHYGVLTCGSC) and 603–627 (CAGRNDCIVDKIRRKNCPACRLRKC). Positions 567–639 (CLICGDEASG…AGMVLGGRKF (73 aa)) form a DNA-binding region, nuclear receptor. Serine 676 is subject to Phosphoserine. One can recognise an NR LBD domain in the interval 679 to 913 (QDIQLIPPLI…EFPEMMSEVI (235 aa)). Residues 687–933 (LINLLMSIEP…MVKPLLFHKK (247 aa)) are AF2; mediates transcriptional activation. Residue arginine 766 coordinates progesterone.

Belongs to the nuclear hormone receptor family. NR3 subfamily. Interacts with SMARD1 and UNC45A. Interacts with CUEDC2; the interaction promotes ubiquitination, decreases sumoylation, and represses transcriptional activity. Interacts with PIAS3; the interaction promotes sumoylation of PR in a hormone-dependent manner, inhibits DNA-binding, and alters nuclear export. Interacts with SP1; the interaction requires ligand-induced phosphorylation on Ser-345 by ERK1/2 MAPK. Interacts with PRMT2. Isoform A interacts with NCOR2. Isoform B (but not isoform A) interacts with NCOA2 and NCOA1. Isoform B (but not isoform A) interacts with KLF9. Interacts with GTF2B. Post-translationally, phosphorylated on multiple serine sites. Several of these sites are hormone-dependent. Phosphorylation on Ser-294 occurs preferentially on isoform B, is highly hormone-dependent and modulates ubiquitination and sumoylation on Lys-388. Phosphorylation on Ser-102 and Ser-345 also requires induction by hormone. Basal phosphorylation on Ser-81, Ser-162, Ser-190 and Ser-400 is increased in response to progesterone and can be phosphorylated in vitro by the CDK2-A1 complex. Increased levels of phosphorylation on Ser-400 also in the presence of EGF, heregulin, IGF, PMA and FBS. Phosphorylation at this site by CDK2 is ligand-independent, and increases nuclear translocation and transcriptional activity. Phosphorylation at Ser-162 and Ser-294, but not at Ser-190, is impaired during the G(2)/M phase of the cell cycle. Phosphorylation on Ser-345 by ERK1/2 MAPK is required for interaction with SP1. Sumoylation is hormone-dependent and represses transcriptional activity. Sumoylation on all three sites is enhanced by PIAS3. Desumoylated by SENP1. Sumoylation on Lys-388, the main site of sumoylation, is repressed by ubiquitination on the same site, and modulated by phosphorylation at Ser-294. In terms of processing, ubiquitination is hormone-dependent and represses sumoylation on the same site. Promoted by MAPK-mediated phosphorylation on Ser-294. Ubiquitinated by UBR5, leading to its degradation: UBR5 specifically recognizes and binds ligand-bound PGR when it is not associated with coactivators (NCOAs). In presence of NCOAs, the UBR5-degron is not accessible, preventing its ubiquitination and degradation. Post-translationally, palmitoylated by ZDHHC7 and ZDHHC21. Palmitoylation is required for plasma membrane targeting and for rapid intracellular signaling via ERK and AKT kinases and cAMP generation. In terms of tissue distribution, in reproductive tissues the expression of isoform A and isoform B varies as a consequence of developmental and hormonal status. Isoform A and isoform B are expressed in comparable levels in uterine glandular epithelium during the proliferative phase of the menstrual cycle. Expression of isoform B but not of isoform A persists in the glands during mid-secretory phase. In the stroma, isoform A is the predominant form throughout the cycle. Heterogeneous isoform expression between the glands of the endometrium basalis and functionalis is implying region-specific responses to hormonal stimuli.

The protein localises to the nucleus. It is found in the cytoplasm. Its subcellular location is the mitochondrion outer membrane. The steroid hormones and their receptors are involved in the regulation of eukaryotic gene expression and affect cellular proliferation and differentiation in target tissues. Depending on the isoform, progesterone receptor functions as a transcriptional activator or repressor. In terms of biological role, ligand-dependent transdominant repressor of steroid hormone receptor transcriptional activity including repression of its isoform B, MR and ER. Transrepressional activity may involve recruitment of corepressor NCOR2. Functionally, transcriptional activator of several progesteron-dependent promoters in a variety of cell types. Involved in activation of SRC-dependent MAPK signaling on hormone stimulation. Its function is as follows. Increases mitochondrial membrane potential and cellular respiration upon stimulation by progesterone. The polypeptide is Progesterone receptor (PGR) (Homo sapiens (Human)).